The sequence spans 173 residues: Co-chaperone protein HscB (173 aa).

The J domain maps to 2–74 (DYFTLFGLPA…LKRAEYMLSQ (73 aa)).

The protein belongs to the HscB family. Interacts with HscA and stimulates its ATPase activity. Interacts with IscU.

In terms of biological role, co-chaperone involved in the maturation of iron-sulfur cluster-containing proteins. Seems to help targeting proteins to be folded toward HscA. The polypeptide is Co-chaperone protein HscB (Xenorhabdus nematophila (strain ATCC 19061 / DSM 3370 / CCUG 14189 / LMG 1036 / NCIMB 9965 / AN6)).